Consider the following 636-residue polypeptide: Methyl-CpG-binding domain protein 1 (636 aa).

Residues 1 to 69 form the MBD domain; that stretch reads MAESWQDCPA…TLFDFRQGTL (69 aa). The segment at 75-113 is disordered; it reads KTHPLAVPSKKKKKPSKPAKTKKQQVGLQRSEVRIETPQ. Residues 83-97 show a composition bias toward basic residues; sequence SKKKKKPSKPAKTKK. Positions 84–88 match the Nuclear localization signal motif; it reads KKKKK. Lys-117 is covalently cross-linked (Glycyl lysine isopeptide (Lys-Gly) (interchain with G-Cter in SUMO2)). 2 CXXC-type zinc fingers span residues 187-234 and 235-281; these read RMFK…RRCL and RIME…RRCF. Positions 194, 197, 200, 206, 209, 212, 228, 233, 243, 246, 249, 255, 258, 261, 275, and 280 each coordinate Zn(2+). Residues 291–314 form a disordered region; that stretch reads GSKVASQRHSQAPPLPPHPASQYT. Lys-293 participates in a covalent cross-link: Glycyl lysine isopeptide (Lys-Gly) (interchain with G-Cter in SUMO2). The CXXC-type 3 zinc-finger motif lies at 348–396; that stretch reads TNQRQNRKCGACAACLRRMDCGRCDFCCDKPKFGGGNQKRQKCRWRQCL. Zn(2+)-binding residues include Cys-356, Cys-359, Cys-362, Cys-368, Cys-371, Cys-374, Cys-390, and Cys-395. The interval 407–474 is disordered; it reads AGSGSGEGAG…GRGSVLPQPD (68 aa). Phosphoserine is present on Ser-409. Glycyl lysine isopeptide (Lys-Gly) (interchain with G-Cter in SUMO2) cross-links involve residues Lys-443 and Lys-461. Glycyl lysine isopeptide (Lys-Gly) (interchain with G-Cter in SUMO2); alternate cross-links involve residues Lys-520 and Lys-559. The disordered stretch occupies residues 543–589; sequence QSGFPSKAADPDLSPVKQEPPGPEEDGEEKKDDVSETTPAEEIGGVG. Residues 550 to 612 are transcriptional repression domain (TRD); the sequence is AADPDLSPVK…RLRDAEAWLP (63 aa).

As to quaternary structure, interacts with OASL, ATF7IP, ATF7IP2 and BAHD1. Binds CHAF1A and the SUV39H1-CBX5 complex via the MBD domain. Binds MGP via the TRD domain. May be part of the MeCP1 complex. During DNA replication, it recruits SETDB1 to form a S phase-specific complex that facilitates methylation of H3 'Lys-9' during replication-coupled chromatin assembly and is at least composed of the CAF-1 subunit CHAF1A, MBD1 and SETDB1. Interacts with the Ten-1 ICD form of TENM1. Post-translationally, sumoylated, sumoylation may increase interaction with ATF7IP. As to expression, highly expressed in kidney, liver and brain. Detected at lower levels in heart, lung, skeletal muscle, spleen and testis.

The protein localises to the nucleus. Its subcellular location is the nucleus matrix. The protein resides in the nucleus speckle. It is found in the chromosome. In terms of biological role, transcriptional repressor that binds CpG islands in promoters where the DNA is methylated at position 5 of cytosine within CpG dinucleotides. Binding is abolished by the presence of 7-mG that is produced by DNA damage by methylmethanesulfonate (MMS). Acts as transcriptional repressor and plays a role in gene silencing by recruiting ATF7IP, which in turn recruits factors such as the histone methyltransferase SETDB1. Probably forms a complex with SETDB1 and ATF7IP that represses transcription and couples DNA methylation and histone 'Lys-9' trimethylation. Isoform 1 can also repress transcription from unmethylated promoters. The polypeptide is Methyl-CpG-binding domain protein 1 (Mus musculus (Mouse)).